Here is a 99-residue protein sequence, read N- to C-terminus: Large ribosomal subunit protein eL30 (99 aa).

Belongs to the eukaryotic ribosomal protein eL30 family. Part of the 50S ribosomal subunit.

The sequence is that of Large ribosomal subunit protein eL30 from Pyrococcus furiosus (strain ATCC 43587 / DSM 3638 / JCM 8422 / Vc1).